Reading from the N-terminus, the 407-residue chain is Phosphopentomutase (407 aa).

Residues Asp-11, Asp-305, His-310, Asp-346, His-347, and His-358 each contribute to the Mn(2+) site.

The protein belongs to the phosphopentomutase family. Mn(2+) is required as a cofactor.

It localises to the cytoplasm. It carries out the reaction 2-deoxy-alpha-D-ribose 1-phosphate = 2-deoxy-D-ribose 5-phosphate. The catalysed reaction is alpha-D-ribose 1-phosphate = D-ribose 5-phosphate. Its pathway is carbohydrate degradation; 2-deoxy-D-ribose 1-phosphate degradation; D-glyceraldehyde 3-phosphate and acetaldehyde from 2-deoxy-alpha-D-ribose 1-phosphate: step 1/2. Functionally, isomerase that catalyzes the conversion of deoxy-ribose 1-phosphate (dRib-1-P) and ribose 1-phosphate (Rib-1-P) to deoxy-ribose 5-phosphate (dRib-5-P) and ribose 5-phosphate (Rib-5-P), respectively. The polypeptide is Phosphopentomutase (Legionella pneumophila (strain Corby)).